The sequence spans 847 residues: B-cell receptor CD22 (847 aa).

A signal peptide spans 1–19 (MHLLGPWLLLLVLEYLAFS). In terms of domain architecture, Ig-like V-type spans 20–138 (DSSKWAFEHP…MERIHLNVSE (119 aa)). The Extracellular segment spans residues 20 to 687 (DSSKWAFEHP…YYSPETIGRR (668 aa)). N-linked (GlcNAc...) asparagine glycans are attached at residues asparagine 67, asparagine 101, and asparagine 112. Arginine 120 lines the N-acetylneuraminate pocket. N-linked (GlcNAc...) asparagine glycans are attached at residues asparagine 135, asparagine 164, and asparagine 231. 6 consecutive Ig-like C2-type domains span residues 143–235 (PHIQ…DTVQ), 242–326 (PKLE…VFLQ), 331–416 (PEPS…LDVQ), 419–500 (PKKV…VALN), 505–582 (PRDV…QTAS), and 593–676 (PRRL…STLT). An intrachain disulfide couples cysteine 161 to cysteine 219. 2 disulfide bridges follow: cysteine 265–cysteine 309 and cysteine 353–cysteine 396. Asparagine 363, asparagine 428, asparagine 445, asparagine 448, and asparagine 479 each carry an N-linked (GlcNAc...) asparagine glycan. 2 cysteine pairs are disulfide-bonded: cysteine 442-cysteine 484 and cysteine 529-cysteine 571. Asparagine 574 and asparagine 634 each carry an N-linked (GlcNAc...) asparagine glycan. Cysteine 616 and cysteine 659 are oxidised to a cystine. A helical membrane pass occupies residues 688-708 (VAVGFGSCLAILILAICGLKL). At 709-847 (QRRWKRTQSQ…ENVDYVILKH (139 aa)) the chain is on the cytoplasmic side. 3 positions are modified to phosphoserine: serine 725, serine 726, and serine 729. 2 short sequence motifs (ITIM motif) span residues 760-765 (ISYTTL) and 794-799 (VTYSVL). Phosphotyrosine is present on tyrosine 762. Phosphotyrosine occurs at positions 807, 822, and 842. 2 short sequence motifs (ITIM motif) span residues 820-825 (IHYSEL) and 840-845 (VDYVIL).

This sequence belongs to the immunoglobulin superfamily. SIGLEC (sialic acid binding Ig-like lectin) family. As to quaternary structure, predominantly monomer of isoform CD22-beta. Also found as heterodimer of isoform CD22-beta and a shorter isoform. Interacts with PTPN6/SHP-1, LYN, SYK, PIK3R1/PIK3R2 and PLCG1 upon phosphorylation. Interacts with GRB2, INPP5D and SHC1 upon phosphorylation. May form a complex with INPP5D/SHIP, GRB2 and SHC1. In terms of processing, phosphorylation of Tyr-762, Tyr-807 and Tyr-822 are involved in binding to SYK, GRB2 and SYK, respectively. Phosphorylation of Tyr-842 is involved in binding to SYK, PLCG2 and PIK3R1/PIK3R2. Phosphorylated on tyrosine residues by LYN.

It localises to the cell membrane. In terms of biological role, most highly expressed siglec (sialic acid-binding immunoglobulin-like lectin) on B-cells that plays a role in various aspects of B-cell biology including differentiation, antigen presentation, and trafficking to bone marrow. Binds to alpha 2,6-linked sialic acid residues of surface molecules such as CD22 itself, CD45 and IgM in a cis configuration. Can also bind to ligands on other cells as an adhesion molecule in a trans configuration. Acts as an inhibitory coreceptor on the surface of B-cells and inhibits B-cell receptor induced signaling, characterized by inhibition of the calcium mobilization and cellular activation. Mechanistically, the immunoreceptor tyrosine-based inhibitory motif domain is phosphorylated by the Src kinase LYN, which in turn leads to the recruitment of the protein tyrosine phosphatase 1/PTPN6, leading to the negative regulation of BCR signaling. If this negative signaling from is of sufficient strength, apoptosis of the B-cell can be induced. This is B-cell receptor CD22 from Pan paniscus (Pygmy chimpanzee).